Here is a 487-residue protein sequence, read N- to C-terminus: Citrate/succinate antiporter (487 aa).

14 helical membrane-spanning segments follow: residues 11–31 (LLAP…DGMP), 60–80 (FIAV…AKEL), 95–115 (GLAG…IFAL), 138–158 (TLTL…FTPS), 190–210 (IGGY…SMFV), 214–234 (APNV…ISWL), 237–257 (FLCF…LSYV), 288–308 (WTLI…SEVI), 309–329 (NATA…VVPW), 345–365 (LATL…DWFA), 379–399 (ATVI…ASLS), 401–421 (HTAT…GVPM), 424–444 (LCIL…YATG), and 463–483 (LGAI…WPIL).

This sequence belongs to the SLC13A/DASS transporter (TC 2.A.47) family. DIT1 subfamily.

It localises to the cell inner membrane. In terms of biological role, responsible for the uptake of citrate in exchange to the efflux of succinate. Has a relatively broad specificity for C(4)-dicarboxylates and tricarboxylates. The chain is Citrate/succinate antiporter (citT) from Escherichia coli O157:H7.